We begin with the raw amino-acid sequence, 373 residues long: Type II secretion system protein L (373 aa).

Topologically, residues 1 to 214 (MTAWRDTLGR…RRSDPMQRWN (214 aa)) are cytoplasmic. A helical transmembrane segment spans residues 215 to 233 (LLLAVAALVLLAVAGWLLL). Over 234–373 (DNRRQAADDL…AKEAADAAQR (140 aa)) the chain is Periplasmic.

The protein belongs to the GSP L family. As to quaternary structure, type II secretion system is composed of four main components: the outer membrane complex, the inner membrane complex, the cytoplasmic secretion ATPase and the periplasm-spanning pseudopilus. Forms homodimers. Interacts with XpsM/GspM. Interacts with XpsE/GspE and XpsF/GspF.

It localises to the cell inner membrane. Functionally, inner membrane component of the type II secretion system required for the energy-dependent secretion of extracellular factors such as proteases and toxins from the periplasm. Plays a role in the complex assembly and recruits XpsM resulting in a stable complex in the inner membrane. Provides thus a link between the energy-providing XpsE protein in the cytoplasm and the rest of the T2SS machinery. This chain is Type II secretion system protein L (pefL), found in Xanthomonas campestris pv. campestris (strain ATCC 33913 / DSM 3586 / NCPPB 528 / LMG 568 / P 25).